Here is a 104-residue protein sequence, read N- to C-terminus: ATP-dependent Clp protease adapter protein ClpS (104 aa).

This sequence belongs to the ClpS family. As to quaternary structure, binds to the N-terminal domain of the chaperone ClpA.

In terms of biological role, involved in the modulation of the specificity of the ClpAP-mediated ATP-dependent protein degradation. The protein is ATP-dependent Clp protease adapter protein ClpS of Bordetella bronchiseptica (strain ATCC BAA-588 / NCTC 13252 / RB50) (Alcaligenes bronchisepticus).